The chain runs to 235 residues: Pre-mRNA-splicing factor ISY1 (235 aa).

It belongs to the ISY1 family. As to quaternary structure, belongs to the NTC complex (or PRP19-associated complex), composed of at least CEF1, CLF1, ISY1, NTC20, SNT309, SYF1, SYF2, and PRP19. The NTC complex associates with the spliceosome after the release of the U1 and U4 snRNAs and forms the CWC spliceosome subcomplex (or CEF1-associated complex) reminiscent of a late-stage spliceosome composed also of the U2, U5 and U6 snRNAs and at least BUD13, BUD31, BRR2, CDC40, CUS1, CWC2, CWC15, CWC21, CWC22, CWC23, CWC24, CWC25, CWC27, ECM2, HSH155, IST3, LEA1, MSL1, PRP8, PRP9, PRP11, PRP21, PRP22, PRP45, PRP46, SLU7, SMB1, SMD1, SMD2, SMD3, SMX2, SMX3, SNU114, SPP2, RSE1 and YJU2. Interacts with CEF1, CWC2, CLF1, and SYF1.

The protein resides in the cytoplasm. Its subcellular location is the nucleus. In terms of biological role, involved in pre-mRNA splicing and cell cycle control. As a component of the NTC complex (or PRP19-associated complex), associates to the spliceosome to mediate conformational rearrangement or to stabilize the structure of the spliceosome after U4 snRNA dissociation, which leads to spliceosome maturation. The cell cycle arrest of SYF2 defective cells may be due to the inefficient splicing of TUB1. Also involved in DNA repair. The polypeptide is Pre-mRNA-splicing factor ISY1 (ISY1) (Saccharomyces cerevisiae (strain ATCC 204508 / S288c) (Baker's yeast)).